The chain runs to 168 residues: CASP-like protein 1U1 (168 aa).

At methionine 1–arginine 6 the chain is on the cytoplasmic side. The chain crosses the membrane as a helical span at residues alanine 7–methionine 27. Over alanine 28 to alanine 49 the chain is Extracellular. A helical transmembrane segment spans residues phenylalanine 50–leucine 70. Residues serine 71–tryptophan 80 lie on the Cytoplasmic side of the membrane. Residues alanine 81–phenylalanine 101 traverse the membrane as a helical segment. At alanine 102–arginine 138 the chain is on the extracellular side. The chain crosses the membrane as a helical span at residues valine 139–threonine 159. Over lysine 160–histidine 168 the chain is Cytoplasmic.

The protein belongs to the Casparian strip membrane proteins (CASP) family. Homodimer and heterodimers.

Its subcellular location is the cell membrane. This Oryza sativa subsp. japonica (Rice) protein is CASP-like protein 1U1.